A 32-amino-acid polypeptide reads, in one-letter code: 24 kDa flagellin (32 aa).

Belongs to the archaeal flagellin family. Glycosylated.

The protein localises to the archaeal flagellum. Functionally, flagellin is the subunit protein which polymerizes to form the filaments of archaeal flagella. This chain is 24 kDa flagellin, found in Methanospirillum hungatei.